Here is a 211-residue protein sequence, read N- to C-terminus: RNA chaperone ProQ (211 aa).

Residues 113 to 147 (RRAVEKANNPKANKKRSVYHSGNKSENKKSAGKKF) are disordered.

The protein belongs to the ProQ family.

It localises to the cytoplasm. Its function is as follows. RNA chaperone with significant RNA binding, RNA strand exchange and RNA duplexing activities. This is RNA chaperone ProQ from Histophilus somni (strain 129Pt) (Haemophilus somnus).